Consider the following 113-residue polypeptide: Hydrogenase maturation factor HypA (113 aa).

Ni(2+) is bound at residue His-2. Positions 70, 73, 86, and 88 each coordinate Zn(2+).

The protein belongs to the HypA/HybF family.

Functionally, involved in the maturation of [NiFe] hydrogenases. Required for nickel insertion into the metal center of the hydrogenase. The polypeptide is Hydrogenase maturation factor HypA (Trichormus variabilis (strain ATCC 29413 / PCC 7937) (Anabaena variabilis)).